We begin with the raw amino-acid sequence, 197 residues long: Holliday junction resolvase RecU (197 aa).

Residues T82, D84, E97, and Q116 each coordinate Mg(2+).

This sequence belongs to the RecU family. Mg(2+) is required as a cofactor.

The protein localises to the cytoplasm. The enzyme catalyses Endonucleolytic cleavage at a junction such as a reciprocal single-stranded crossover between two homologous DNA duplexes (Holliday junction).. In terms of biological role, endonuclease that resolves Holliday junction intermediates in genetic recombination. Cleaves mobile four-strand junctions by introducing symmetrical nicks in paired strands. Promotes annealing of linear ssDNA with homologous dsDNA. Required for DNA repair, homologous recombination and chromosome segregation. The chain is Holliday junction resolvase RecU from Streptococcus mutans serotype c (strain ATCC 700610 / UA159).